A 335-amino-acid chain; its full sequence is Homeobox protein DBX1 (335 aa).

Disordered regions lie at residues 56–102 and 240–335; these read RSIP…LSPA and KERE…ITVS. The segment covering 83–95 has biased composition (low complexity); that stretch reads GSPGSGSRRGSSP. Residues 181-240 constitute a DNA-binding region (homeobox); sequence GMLRRAVFSDVQRKALEKTFQKQKYISKPDRKKLASKLGLKDSQVKIWFQNRRMKWRNSK. Positions 299-317 are enriched in low complexity; that stretch reads GPLPASPAHSSSPGKPSDF. The segment covering 318–335 has biased composition (acidic residues); the sequence is SDSDEDEEGEEDEEITVS.

Belongs to the H2.0 homeobox family.

It localises to the nucleus. Its function is as follows. Could have a role in patterning the central nervous system during embryogenesis. Has a key role in regulating the distinct phenotypic features that distinguish two major classes of ventral interneurons, V0 and V1 neurons. Regulates the transcription factor profile, neurotransmitter phenotype, intraspinal migratory path and axonal trajectory of V0 neurons, features that differentiate them from an adjacent set of V1 neurons. In Rattus norvegicus (Rat), this protein is Homeobox protein DBX1 (Dbx1).